An 809-amino-acid chain; its full sequence is Poly(A) polymerase (809 aa).

The segment at 1–50 is disordered; sequence MNKNGGPPVANITTSSTTITSTTTTQAKSQLPSSLSVNNLHTTQGSTDQP. The span at 12–25 shows a compositional bias: low complexity; that stretch reads ITTSSTTITSTTTT. Positions 26 to 50 are enriched in polar residues; that stretch reads QAKSQLPSSLSVNNLHTTQGSTDQP. ATP-binding positions include 133–135, 146–148, Asp-200, Lys-262, Tyr-271, and 280–281; these read FGS, DID, and GV. Mg(2+)-binding residues include Asp-146, Asp-148, and Asp-200. 2 disordered regions span residues 529 to 760 and 785 to 809; these read FVKD…QQIQ and ISSS…IRGN. The span at 530–540 shows a compositional bias: basic and acidic residues; that stretch reads VKDEGPEEPVK. Low complexity predominate over residues 572–655; it reads SPITTNINST…TPPTTTTINS (84 aa). Over residues 656–665 the composition is skewed to polar residues; sequence VQPPSAQPTE. Residues 666-706 are compositionally biased toward low complexity; the sequence is NGSSTSNSPTSTSINNTALPPNPTTNSESTIETTITLPTTL. The segment covering 707-735 has biased composition (polar residues); the sequence is ESQTSTLKDSNEISTNGTAVATEPTITSP. Composition is skewed to low complexity over residues 736-760 and 785-794; these read SVNI…QQIQ and ISSSSETSQS.

It belongs to the poly(A) polymerase family. It depends on Mg(2+) as a cofactor. The cofactor is Mn(2+).

The protein resides in the nucleus. It catalyses the reaction RNA(n) + ATP = RNA(n)-3'-adenine ribonucleotide + diphosphate. Its function is as follows. Polymerase that creates the 3'-poly(A) tail of mRNA's. May acquire specificity through interaction with a cleavage and polyadenylation factor. In Dictyostelium discoideum (Social amoeba), this protein is Poly(A) polymerase (papA).